A 432-amino-acid chain; its full sequence is MQVSVETTQGLGRRVTITIAADSIETAVKSELVNVAKKVRIDGFRKGKVPMNIVAQRYGASVRQDVLGDLMSRNFVDAIIKEKINPAGAPNYVPGEYKVGEDFTYSVEFEVYPEVELTGLESIEVEKPVVEVTDADVDVMLDTLRKQQATWKEKDGAADAEDRVTIDFTGSVDGEEFEGGKATDFVLAMGQGRMIPGFEDGVKGHKAGEEFTIDVTFPEEYHAENLKGKAAKFVINLKKVEERELPELTEEFIKRFGVEDGSVAGLRAEVRKNMERELKGAVRNRVKSQAIEGLVKANDIDVPAALIDSEIDVLRRQAAQRFGGNEKQALELPRELFEEQAKRRVVVGLLLGEVIRTNELKADEERVKGLIEEMASAYEDPKEVIEFYSKNKELMDNMRNVALEEQAVEAVLAKAKVSEKATSFNELMNQQA.

Residues 161 to 246 (EDRVTIDFTG…LKKVEERELP (86 aa)) enclose the PPIase FKBP-type domain.

This sequence belongs to the FKBP-type PPIase family. Tig subfamily.

The protein localises to the cytoplasm. It catalyses the reaction [protein]-peptidylproline (omega=180) = [protein]-peptidylproline (omega=0). Involved in protein export. Acts as a chaperone by maintaining the newly synthesized protein in an open conformation. Functions as a peptidyl-prolyl cis-trans isomerase. This chain is Trigger factor, found in Salmonella schwarzengrund (strain CVM19633).